Reading from the N-terminus, the 213-residue chain is 2-C-methyl-D-erythritol 4-phosphate cytidylyltransferase (213 aa).

The protein belongs to the IspD/TarI cytidylyltransferase family. IspD subfamily.

It catalyses the reaction 2-C-methyl-D-erythritol 4-phosphate + CTP + H(+) = 4-CDP-2-C-methyl-D-erythritol + diphosphate. It functions in the pathway isoprenoid biosynthesis; isopentenyl diphosphate biosynthesis via DXP pathway; isopentenyl diphosphate from 1-deoxy-D-xylulose 5-phosphate: step 2/6. Catalyzes the formation of 4-diphosphocytidyl-2-C-methyl-D-erythritol from CTP and 2-C-methyl-D-erythritol 4-phosphate (MEP). This chain is 2-C-methyl-D-erythritol 4-phosphate cytidylyltransferase, found in Thermus thermophilus (strain ATCC BAA-163 / DSM 7039 / HB27).